The chain runs to 298 residues: Inosose dehydratase (298 aa).

This sequence belongs to the IolE/MocC family. Glutathione is required as a cofactor. Requires Co(2+) as cofactor. The cofactor is Mn(2+).

It catalyses the reaction scyllo-inosose = 3D-3,5/4-trihydroxycyclohexane-1,2-dione + H2O. Its pathway is polyol metabolism; myo-inositol degradation into acetyl-CoA; acetyl-CoA from myo-inositol: step 2/7. Catalyzes the dehydration of inosose (2-keto-myo-inositol, 2KMI or 2,4,6/3,5-pentahydroxycyclohexanone) to 3D-(3,5/4)-trihydroxycyclohexane-1,2-dione (D-2,3-diketo-4-deoxy-epi-inositol). This chain is Inosose dehydratase, found in Bacillus cereus (strain AH820).